We begin with the raw amino-acid sequence, 274 residues long: Glutamate--cysteine ligase regulatory subunit (274 aa).

K263 is modified (N6-acetyllysine).

Belongs to the aldo/keto reductase family. Glutamate--cysteine ligase light chain subfamily. As to quaternary structure, heterodimer of a catalytic heavy chain and a regulatory light chain. In all tissues examined. Highest levels in skeletal muscle.

The protein operates within sulfur metabolism; glutathione biosynthesis; glutathione from L-cysteine and L-glutamate: step 1/2. This Homo sapiens (Human) protein is Glutamate--cysteine ligase regulatory subunit (GCLM).